The chain runs to 45 residues: Endo-1,4-beta-xylanase Xyn10A (45 aa).

The protein belongs to the glycosyl hydrolase 10 (cellulase F) family.

It is found in the secreted. It localises to the extracellular space. It carries out the reaction Endohydrolysis of (1-&gt;4)-beta-D-xylosidic linkages in xylans.. It catalyses the reaction Endohydrolysis of (1-&gt;4)-beta-D-glucosidic linkages in cellulose, lichenin and cereal beta-D-glucans.. It participates in glycan degradation; xylan degradation. Has xylanase, avicelase and cellobiohydrolase activity. This chain is Endo-1,4-beta-xylanase Xyn10A, found in Gloeophyllum trabeum (Brown rot fungus).